Consider the following 596-residue polypeptide: Merlin (596 aa).

Phosphoserine is present on serine 13. The 290-residue stretch at 22 to 311 (FTVRIVTMDA…GNHDLFMRRR (290 aa)) folds into the FERM domain. Serine 518 bears the Phosphoserine; by PAK mark. A disordered region spans residues 560-580 (VLHSESSDRGGPSSKHNTIKK).

In terms of assembly, interacts with NHERF1, HGS and AGAP2. Interacts with SGSM3. Interacts (via FERM domain) with MPP1. Interacts with LAYN. Interacts with WWC1. Interacts with the CUL4A-RBX1-DDB1-VprBP/DCAF1 E3 ubiquitin-protein ligase complex. The unphosphorylated form interacts (via FERM domain) with VPRBP/DCAF1. Interacts (via FERM domain) with NOP53; the interaction is direct. Interacts with SCHIP1; the interaction is direct. Phosphorylation of Ser-518 inhibits nuclear localization by disrupting the intramolecular association of the FERM domain with the C-terminal tail. The dephosphorylation of Ser-518 favors the interaction with NOP53. Post-translationally, ubiquitinated by the CUL4A-RBX1-DDB1-DCAF1/VprBP E3 ubiquitin-protein ligase complex for ubiquitination and subsequent proteasome-dependent degradation.

The protein resides in the cell membrane. It is found in the cell projection. Its subcellular location is the cytoplasm. The protein localises to the cytoskeleton. It localises to the nucleus. In terms of biological role, probable regulator of the Hippo/SWH (Sav/Wts/Hpo) signaling pathway, a signaling pathway that plays a pivotal role in tumor suppression by restricting proliferation and promoting apoptosis. Along with WWC1 can synergistically induce the phosphorylation of LATS1 and LATS2 and can probably function in the regulation of the Hippo/SWH (Sav/Wts/Hpo) signaling pathway. May act as a membrane stabilizing protein. May inhibit PI3 kinase by binding to AGAP2 and impairing its stimulating activity. Suppresses cell proliferation and tumorigenesis by inhibiting the CUL4A-RBX1-DDB1-VprBP/DCAF1 E3 ubiquitin-protein ligase complex. Plays a role in lens development and is required for complete fiber cell terminal differentiation, maintenance of cell polarity and separation of the lens vesicle from the corneal epithelium. This Mus musculus (Mouse) protein is Merlin (Nf2).